The following is a 405-amino-acid chain: Pentatricopeptide repeat-containing protein At1g11630, mitochondrial (405 aa).

The transit peptide at 1 to 72 (MAFLFRIRTS…RSTSLSPDYH (72 aa)) directs the protein to the mitochondrion. PPR repeat units follow at residues 74 to 108 (DRII…QPDP), 110 to 144 (SESF…EIPR), 145 to 180 (TVKS…GIEP), 181 to 215 (DLET…WIKP), 216 to 250 (TAAS…GVHV), 251 to 285 (GVAT…RMRP), 286 to 320 (NSVT…GYKP), 321 to 355 (DSEC…NWVP), and 356 to 386 (SFSV…VKEK).

It belongs to the PPR family. P subfamily.

Its subcellular location is the mitochondrion. The polypeptide is Pentatricopeptide repeat-containing protein At1g11630, mitochondrial (Arabidopsis thaliana (Mouse-ear cress)).